We begin with the raw amino-acid sequence, 598 residues long: Protein HIGH CHLOROPHYLL FLUORESCENCE PHENOTYPE 173, chloroplastic (598 aa).

The N-terminal 79 residues, 1–79 (MVGSIVGSNM…ITTKESEETV (79 aa)), are a transit peptide targeting the chloroplast. A disordered region spans residues 42 to 106 (VIPRAQSSSS…PTLKLDDVNP (65 aa)). Basic and acidic residues predominate over residues 73–84 (KESEETVAKKLD). A compositionally biased stretch (pro residues) spans 87–97 (PPSPQSPPSPP).

Belongs to the NmrA-type oxidoreductase family. As to quaternary structure, component of a high molecular weight complex containing psbA mRNA, OHP1, OHP2 and HCF244, and PSII core proteins D1/D2, HCF136 and HCF173. Interacts with LPE1.

The protein localises to the plastid. It is found in the chloroplast membrane. Its subcellular location is the chloroplast thylakoid membrane. The protein resides in the chloroplast stroma. Auxiliary factor required, together with HCF244, for the biogenesis of photosystem II (PSII), especially for the synthesis of the reaction center proteins (e.g. D1), via the regulation of the corresponding mRNA (e.g. psbA) translation initiation (ribosomal loading) and stabilization. In Arabidopsis thaliana (Mouse-ear cress), this protein is Protein HIGH CHLOROPHYLL FLUORESCENCE PHENOTYPE 173, chloroplastic.